Consider the following 900-residue polypeptide: Nonribosomal peptide synthetase AMT10 (900 aa).

Residues 284–686 (KQAQQNPAAM…ARRNGYIKLR (403 aa)) are adenylation. The 77-residue stretch at 824-900 (ELQSDMERYL…QMARNCSLLD (77 aa)) folds into the Carrier domain. O-(pantetheine 4'-phosphoryl)serine is present on Ser-861.

The protein belongs to the NRP synthetase family.

The protein operates within mycotoxin biosynthesis. In terms of biological role, nonribosomal peptide synthetase; part of the gene clusters that mediate the biosynthesis of AM-toxins, host-selective toxins (HSTs) causing Alternaria blotch on apple, a worldwide distributed disease. AM-toxins are cyclic depsipeptides containing the 3 residues 2-hydroxy-isovaleric acid (2-HIV), dehydroalanine, L-alanine which are common for all 3 AM-toxins I to III. The fourth precursor is L-alpha-amino-methoxyphenyl-valeric acid (L-Amv) for AM-toxin I, L-alpha-amino-phenyl-valeric acid (L-Apv) for AM-toxin II, and L-alpha-amino-hydroxyphenyl-valeric acid (L-Ahv) for AM-toxin III. AM-toxins have two target sites for affecting susceptible apple cells; they cause invagination of the plasma membrane and electrolyte loss and chloroplast disorganization. The non-ribosomal peptide synthetase AMT1 contains 4 catalytic modules and is responsible for activation of each residue in AM-toxin. The aldo-keto reductase AMT2 catalyzes the conversion of 2-keto-isovaleric acid (2-KIV) to 2-hydroxy-isovaleric acid (2-HIV), one of the precursor residues incorporated by AMT1 during AM-toxin biosynthesis, by reduction of its ketone to an alcohol. The cytochrome P450 monooxygenase AMT3 and the thioesterase AMT4 are also important for AM-toxin production, but their exact function within the AM-toxin biosynthesis are not known yet. Up to 21 proteins (including AMT1 to AMT4) are predicted to be involved in AM-toxin biosynthesis since their expression ishighly up-regulated in AM-toxin-producing cultures. This chain is Nonribosomal peptide synthetase AMT10, found in Alternaria alternata (Alternaria rot fungus).